The following is a 95-amino-acid chain: Small ribosomal subunit protein uS19 (95 aa).

The segment at 75–95 is disordered; it reads APTRSFRGHGGKKADKRGKMK. The span at 80–95 shows a compositional bias: basic residues; that stretch reads FRGHGGKKADKRGKMK.

This sequence belongs to the universal ribosomal protein uS19 family.

Protein S19 forms a complex with S13 that binds strongly to the 16S ribosomal RNA. The sequence is that of Small ribosomal subunit protein uS19 from Roseiflexus sp. (strain RS-1).